Here is a 345-residue protein sequence, read N- to C-terminus: Phosphoribosylformylglycinamidine cyclo-ligase (345 aa).

Belongs to the AIR synthase family.

The protein resides in the cytoplasm. It carries out the reaction 2-formamido-N(1)-(5-O-phospho-beta-D-ribosyl)acetamidine + ATP = 5-amino-1-(5-phospho-beta-D-ribosyl)imidazole + ADP + phosphate + H(+). The protein operates within purine metabolism; IMP biosynthesis via de novo pathway; 5-amino-1-(5-phospho-D-ribosyl)imidazole from N(2)-formyl-N(1)-(5-phospho-D-ribosyl)glycinamide: step 2/2. This chain is Phosphoribosylformylglycinamidine cyclo-ligase, found in Escherichia coli (strain 55989 / EAEC).